The chain runs to 339 residues: DNA-directed RNA polymerase subunit alpha (339 aa).

The interval 1–233 (MVREEVAGST…DLFLPFLHAE (233 aa)) is alpha N-terminal domain (alpha-NTD). Residues 264 to 339 (KKGIPLNCIF…IDLLKNKLSF (76 aa)) form an alpha C-terminal domain (alpha-CTD) region.

Belongs to the RNA polymerase alpha chain family. As to quaternary structure, in plastids the minimal PEP RNA polymerase catalytic core is composed of four subunits: alpha, beta, beta', and beta''. When a (nuclear-encoded) sigma factor is associated with the core the holoenzyme is formed, which can initiate transcription.

It is found in the plastid. Its subcellular location is the chloroplast. The catalysed reaction is RNA(n) + a ribonucleoside 5'-triphosphate = RNA(n+1) + diphosphate. Functionally, DNA-dependent RNA polymerase catalyzes the transcription of DNA into RNA using the four ribonucleoside triphosphates as substrates. In Festucopsis festucoides, this protein is DNA-directed RNA polymerase subunit alpha.